A 300-amino-acid polypeptide reads, in one-letter code: TLR adapter interacting with SLC15A4 on the lysosome (300 aa).

A pLxIS motif motif is present at residues 289-293; that stretch reads SLHIS. At serine 293 the chain carries Phosphoserine.

Interacts (via pLxIS motif) with IRF5; leading to IRF5 activation. Interacts with SLC15A4; leading to its recruitment to endolysosome. The phosphorylated pLxIS motif constitutes an IRF5-binding motif, leading to recruitment of the transcription factor IRF5 to induce type-I interferons and other cytokines.

It is found in the lysosome membrane. The protein resides in the endosome membrane. Its subcellular location is the nucleus. It localises to the cytoplasm. Functionally, innate immune adapter that mediates the recruitment and activation of IRF5 downstream of endolysosomal toll-like receptors TLR7, TLR8 and TLR9. Following recruitment to endolysosome by SLC15A4 downstream of TLR7, TLR8 and TLR9, specifically recruits IRF5 transcription factor via its pLxIS motif, leading to IRF5 activation and subsequent expression of type I interferons. Plays a role in the regulation of endolysosomal pH in immune cells such as B-cells, dendritic cells and monocytes. This Bos taurus (Bovine) protein is TLR adapter interacting with SLC15A4 on the lysosome.